We begin with the raw amino-acid sequence, 125 residues long: MORF4 family-associated protein 1 (125 aa).

Residues 76-99 are disordered; sequence ESALNHLQGAGGAEPRGPRAEKAD. The stretch at 94-124 forms a coiled coil; the sequence is RAEKADEKAQEMAKMAEMLVQLVRRIEKSES.

The protein belongs to the MORF4 family-associated protein family. As to quaternary structure, found in a complex composed of MORF4L1, MRFAP1 and RB1. Interacts via its N-terminus with MORF4L1. Interacts with CSTB and MORF4L2.

The protein localises to the nucleus. Its subcellular location is the cytoplasm. It is found in the perinuclear region. The chain is MORF4 family-associated protein 1 from Rattus norvegicus (Rat).